The sequence spans 448 residues: tRNA(Ile)-lysidine synthase (448 aa).

Position 29–34 (29–34 (SGGVDS)) interacts with ATP.

This sequence belongs to the tRNA(Ile)-lysidine synthase family.

The protein localises to the cytoplasm. It carries out the reaction cytidine(34) in tRNA(Ile2) + L-lysine + ATP = lysidine(34) in tRNA(Ile2) + AMP + diphosphate + H(+). Its function is as follows. Ligates lysine onto the cytidine present at position 34 of the AUA codon-specific tRNA(Ile) that contains the anticodon CAU, in an ATP-dependent manner. Cytidine is converted to lysidine, thus changing the amino acid specificity of the tRNA from methionine to isoleucine. In Azoarcus sp. (strain BH72), this protein is tRNA(Ile)-lysidine synthase.